A 285-amino-acid chain; its full sequence is Aspartate/glutamate leucyltransferase (285 aa).

This sequence belongs to the R-transferase family. Bpt subfamily.

The protein localises to the cytoplasm. It catalyses the reaction N-terminal L-glutamyl-[protein] + L-leucyl-tRNA(Leu) = N-terminal L-leucyl-L-glutamyl-[protein] + tRNA(Leu) + H(+). The catalysed reaction is N-terminal L-aspartyl-[protein] + L-leucyl-tRNA(Leu) = N-terminal L-leucyl-L-aspartyl-[protein] + tRNA(Leu) + H(+). Its function is as follows. Functions in the N-end rule pathway of protein degradation where it conjugates Leu from its aminoacyl-tRNA to the N-termini of proteins containing an N-terminal aspartate or glutamate. The chain is Aspartate/glutamate leucyltransferase from Dinoroseobacter shibae (strain DSM 16493 / NCIMB 14021 / DFL 12).